A 139-amino-acid chain; its full sequence is Large ribosomal subunit protein eL32 (139 aa).

Belongs to the eukaryotic ribosomal protein eL32 family.

In Encephalitozoon cuniculi (strain GB-M1) (Microsporidian parasite), this protein is Large ribosomal subunit protein eL32 (RPL32).